We begin with the raw amino-acid sequence, 353 residues long: Uroporphyrinogen decarboxylase (353 aa).

Substrate is bound by residues 29–33 (RQAGR), aspartate 78, tyrosine 154, serine 209, and histidine 322.

It belongs to the uroporphyrinogen decarboxylase family. As to quaternary structure, homodimer.

It localises to the cytoplasm. The catalysed reaction is uroporphyrinogen III + 4 H(+) = coproporphyrinogen III + 4 CO2. It functions in the pathway porphyrin-containing compound metabolism; protoporphyrin-IX biosynthesis; coproporphyrinogen-III from 5-aminolevulinate: step 4/4. Functionally, catalyzes the decarboxylation of four acetate groups of uroporphyrinogen-III to yield coproporphyrinogen-III. In Bacillus velezensis (strain DSM 23117 / BGSC 10A6 / LMG 26770 / FZB42) (Bacillus amyloliquefaciens subsp. plantarum), this protein is Uroporphyrinogen decarboxylase.